The following is a 228-amino-acid chain: NAD(P)H-hydrate epimerase (228 aa).

The YjeF N-terminal domain occupies 9 to 209 (VRAVERLAHR…LLGLTPAFLA (201 aa)). 53 to 57 (NNGGD) provides a ligand contact to (6S)-NADPHX. K(+) contacts are provided by Asn-54 and Asp-115. (6S)-NADPHX contacts are provided by residues 119-125 (GIGLARP) and Asp-148. Residue Ser-151 coordinates K(+).

This sequence belongs to the NnrE/AIBP family. Requires K(+) as cofactor.

It carries out the reaction (6R)-NADHX = (6S)-NADHX. It catalyses the reaction (6R)-NADPHX = (6S)-NADPHX. Catalyzes the epimerization of the S- and R-forms of NAD(P)HX, a damaged form of NAD(P)H that is a result of enzymatic or heat-dependent hydration. This is a prerequisite for the S-specific NAD(P)H-hydrate dehydratase to allow the repair of both epimers of NAD(P)HX. The polypeptide is NAD(P)H-hydrate epimerase (Bordetella bronchiseptica (strain ATCC BAA-588 / NCTC 13252 / RB50) (Alcaligenes bronchisepticus)).